A 337-amino-acid polypeptide reads, in one-letter code: DNA-directed RNA polymerase subunit alpha (337 aa).

The alpha N-terminal domain (alpha-NTD) stretch occupies residues 1–233 (MIQKNWQELI…DQLSIFVNFE (233 aa)). Positions 249-337 (FNPALLKKVD…DLAKRYEDQY (89 aa)) are alpha C-terminal domain (alpha-CTD).

This sequence belongs to the RNA polymerase alpha chain family. In terms of assembly, homodimer. The RNAP catalytic core consists of 2 alpha, 1 beta, 1 beta' and 1 omega subunit. When a sigma factor is associated with the core the holoenzyme is formed, which can initiate transcription.

It carries out the reaction RNA(n) + a ribonucleoside 5'-triphosphate = RNA(n+1) + diphosphate. DNA-dependent RNA polymerase catalyzes the transcription of DNA into RNA using the four ribonucleoside triphosphates as substrates. The protein is DNA-directed RNA polymerase subunit alpha of Brucella ovis (strain ATCC 25840 / 63/290 / NCTC 10512).